Consider the following 101-residue polypeptide: Movement protein (101 aa).

The helical transmembrane segment at 30–50 (EVAILSFVALICFYLLYLWVL) threads the bilayer. The interval 75–101 (VDRSNPIPNIPAPPSQGNPGPFVPGTG) is disordered.

Belongs to the mastrevirus movement protein family. In terms of assembly, interacts with the capsid protein (CP). Part of a MP-CP-viral DNA complex.

It is found in the host membrane. In terms of biological role, involved in the viral transport within, and between cells. This Maize streak virus genotype A (isolate Kenya) (MSV) protein is Movement protein.